Here is a 277-residue protein sequence, read N- to C-terminus: Undecaprenyl-diphosphatase (277 aa).

The next 8 helical transmembrane spans lie at 1-21 (MDII…FLPV), 38-58 (SSLA…LWFF), 93-113 (LVWY…LFES), 118-138 (LFAG…TILY), 168-188 (AILP…VIGL), 191-211 (EFAA…AFVV), 222-242 (FNAL…YLAI), and 256-276 (IFAY…ITHL).

It belongs to the UppP family.

It localises to the cell membrane. It catalyses the reaction di-trans,octa-cis-undecaprenyl diphosphate + H2O = di-trans,octa-cis-undecaprenyl phosphate + phosphate + H(+). Catalyzes the dephosphorylation of undecaprenyl diphosphate (UPP). This chain is Undecaprenyl-diphosphatase, found in Methanobrevibacter smithii (strain ATCC 35061 / DSM 861 / OCM 144 / PS).